The chain runs to 230 residues: Large ribosomal subunit protein uL1 (230 aa).

Belongs to the universal ribosomal protein uL1 family. In terms of assembly, part of the 50S ribosomal subunit.

Its function is as follows. Binds directly to 23S rRNA. The L1 stalk is quite mobile in the ribosome, and is involved in E site tRNA release. In terms of biological role, protein L1 is also a translational repressor protein, it controls the translation of the L11 operon by binding to its mRNA. In Desulforapulum autotrophicum (strain ATCC 43914 / DSM 3382 / VKM B-1955 / HRM2) (Desulfobacterium autotrophicum), this protein is Large ribosomal subunit protein uL1.